Consider the following 404-residue polypeptide: ORC1-type DNA replication protein 2 (404 aa).

ATP-binding positions include 64–68 (TGKTS), Tyr-205, and Arg-217.

Belongs to the CDC6/cdc18 family. Interacts with MCM.

Involved in regulation of DNA replication. Stimulates the helicase activity of MCM via stimulation of its ATPase activity. Binding to MCM may result in conformational changes in MCM, leading to catalytic ATP hydrolysis by the helicase. Directly stimulates MCM movement along single-stranded and double-stranded DNA. Does not bind DNA. The chain is ORC1-type DNA replication protein 2 (cdc6-2) from Thermoplasma acidophilum (strain ATCC 25905 / DSM 1728 / JCM 9062 / NBRC 15155 / AMRC-C165).